The chain runs to 223 residues: Imidazoleglycerol-phosphate dehydratase (223 aa).

This sequence belongs to the imidazoleglycerol-phosphate dehydratase family.

It catalyses the reaction D-erythro-1-(imidazol-4-yl)glycerol 3-phosphate = 3-(imidazol-4-yl)-2-oxopropyl phosphate + H2O. It functions in the pathway amino-acid biosynthesis; L-histidine biosynthesis; L-histidine from 5-phospho-alpha-D-ribose 1-diphosphate: step 6/9. The protein is Imidazoleglycerol-phosphate dehydratase (HIS3) of Zygosaccharomyces bailii.